The primary structure comprises 677 residues: UvrABC system protein B (677 aa).

The Helicase ATP-binding domain maps to 24–412 (EGVLEGVPAQ…EGIVVEQVIR (389 aa)). 37 to 44 (GVTGSGKT) serves as a coordination point for ATP. The Beta-hairpin signature appears at 90–113 (YYDYYQPEAYLPSSDTYIEKDLAI). The region spanning 429–591 (QIDDLMEEIQ…ITPQQIKKAR (163 aa)) is the Helicase C-terminal domain. The UVR domain maps to 635–670 (EKSMERTRKLMQEAAKKLEFIEAAQYRDELLKMEDL).

This sequence belongs to the UvrB family. Forms a heterotetramer with UvrA during the search for lesions. Interacts with UvrC in an incision complex.

The protein resides in the cytoplasm. Its function is as follows. The UvrABC repair system catalyzes the recognition and processing of DNA lesions. A damage recognition complex composed of 2 UvrA and 2 UvrB subunits scans DNA for abnormalities. Upon binding of the UvrA(2)B(2) complex to a putative damaged site, the DNA wraps around one UvrB monomer. DNA wrap is dependent on ATP binding by UvrB and probably causes local melting of the DNA helix, facilitating insertion of UvrB beta-hairpin between the DNA strands. Then UvrB probes one DNA strand for the presence of a lesion. If a lesion is found the UvrA subunits dissociate and the UvrB-DNA preincision complex is formed. This complex is subsequently bound by UvrC and the second UvrB is released. If no lesion is found, the DNA wraps around the other UvrB subunit that will check the other stand for damage. In Bacteroides fragilis (strain YCH46), this protein is UvrABC system protein B.